The primary structure comprises 338 residues: Aspartate-semialdehyde dehydrogenase (338 aa).

Residues 13–16 (SGAV) and 41–42 (RS) contribute to the NADP(+) site. Arginine 101 contacts phosphate. Cysteine 132 (acyl-thioester intermediate) is an active-site residue. Residue glutamine 159 coordinates substrate. Residue 162–163 (SG) coordinates NADP(+). Residue lysine 216 coordinates phosphate. Arginine 238 provides a ligand contact to substrate. Histidine 245 (proton acceptor) is an active-site residue. Asparagine 317 is a binding site for NADP(+).

Belongs to the aspartate-semialdehyde dehydrogenase family. As to quaternary structure, homodimer.

It catalyses the reaction L-aspartate 4-semialdehyde + phosphate + NADP(+) = 4-phospho-L-aspartate + NADPH + H(+). Its pathway is amino-acid biosynthesis; L-lysine biosynthesis via DAP pathway; (S)-tetrahydrodipicolinate from L-aspartate: step 2/4. The protein operates within amino-acid biosynthesis; L-methionine biosynthesis via de novo pathway; L-homoserine from L-aspartate: step 2/3. It functions in the pathway amino-acid biosynthesis; L-threonine biosynthesis; L-threonine from L-aspartate: step 2/5. Catalyzes the NADPH-dependent formation of L-aspartate-semialdehyde (L-ASA) by the reductive dephosphorylation of L-aspartyl-4-phosphate. The sequence is that of Aspartate-semialdehyde dehydrogenase from Shewanella violacea (strain JCM 10179 / CIP 106290 / LMG 19151 / DSS12).